A 139-amino-acid chain; its full sequence is Large ribosomal subunit protein uL16 (139 aa).

This sequence belongs to the universal ribosomal protein uL16 family. Part of the 50S ribosomal subunit.

In terms of biological role, binds 23S rRNA and is also seen to make contacts with the A and possibly P site tRNAs. The protein is Large ribosomal subunit protein uL16 of Gloeothece citriformis (strain PCC 7424) (Cyanothece sp. (strain PCC 7424)).